A 368-amino-acid chain; its full sequence is Flap endonuclease 1 (368 aa).

The N-domain stretch occupies residues 1-104 (MGIHDLSKVI…GELLKRGARR (104 aa)). Mg(2+) is bound at residue Asp-34. 2 residues coordinate DNA: Arg-47 and Arg-70. Asp-86 is a Mg(2+) binding site. Residues 103 to 123 (RRKEAQANLEEATEQGDTEQM) are disordered. Positions 122-251 (QMEKFSRRLV…QKAYQLIKEH (130 aa)) are I-domain. Glu-158, Glu-160, Asp-179, and Asp-181 together coordinate Mg(2+). Glu-158 is a DNA binding site. 2 residues coordinate DNA: Gly-229 and Asp-231. Asp-231 is a Mg(2+) binding site. The interval 334–342 (QQGRLDSFF) is interaction with PCNA.

This sequence belongs to the XPG/RAD2 endonuclease family. FEN1 subfamily. Interacts with PCNA. Three molecules of FEN1 bind to one PCNA trimer with each molecule binding to one PCNA monomer. PCNA stimulates the nuclease activity without altering cleavage specificity. Requires Mg(2+) as cofactor. Phosphorylated. Phosphorylation upon DNA damage induces relocalization to the nuclear plasma.

The protein localises to the nucleus. It localises to the nucleolus. It is found in the nucleoplasm. The protein resides in the mitochondrion. Structure-specific nuclease with 5'-flap endonuclease and 5'-3' exonuclease activities involved in DNA replication and repair. During DNA replication, cleaves the 5'-overhanging flap structure that is generated by displacement synthesis when DNA polymerase encounters the 5'-end of a downstream Okazaki fragment. It enters the flap from the 5'-end and then tracks to cleave the flap base, leaving a nick for ligation. Also involved in the long patch base excision repair (LP-BER) pathway, by cleaving within the apurinic/apyrimidinic (AP) site-terminated flap. Acts as a genome stabilization factor that prevents flaps from equilibrating into structures that lead to duplications and deletions. Also possesses 5'-3' exonuclease activity on nicked or gapped double-stranded DNA, and exhibits RNase H activity. Also involved in replication and repair of rDNA and in repairing mitochondrial DNA. This chain is Flap endonuclease 1, found in Monosiga brevicollis (Choanoflagellate).